Here is a 461-residue protein sequence, read N- to C-terminus: MIDTIAALSTAQGPGAIGILRVSGSLVMPIALAVLEKNQKPLTETFLQNQKRSAIFCDFVENGKPLDQIVFFYFPAPNSYTGEDLAEFHLHGNPLLLKRALHVLFEKGARPAQKGEFTKRAYMNGKINLSGAEAISRLIEARSKYELELAQKNVFGEITKLSSKIRSDLISLKAECEAEIDFSTEDLTFESLEERKNRMVALKNLCSKLIKDSERAESYILQSTVVLYGEPNTGKSSLMNLLIGKDRSIISDVPGTTRDYIAEELSLDGIPIRLVDTAGIRDTTDNIEQMGIERSKREADSANVKLFLIDTSLPFEKQSFLLKHKDRLFGSLIVANKIDSKHPSWHTESIHDIQEEFQLTISEISCKTKQGIPELLELLKSKLTSKDDTEDLVLLEDRQRYHIQKIESCLSEAIQLMENNAPAEIYIQEINVALHEIGQVNGVVENEEILGRIFSKFCVGK.

Positions 21, 87, and 126 each coordinate (6S)-5-formyl-5,6,7,8-tetrahydrofolate. The 163-residue stretch at 222–384 (QSTVVLYGEP…LLELLKSKLT (163 aa)) folds into the TrmE-type G domain. A K(+)-binding site is contributed by asparagine 232. GTP is bound by residues 232-237 (NTGKSS), 251-257 (SDVPGTT), and 276-279 (DTAG). Serine 236 contacts Mg(2+). Residues serine 251, valine 253, and threonine 256 each contribute to the K(+) site. Threonine 257 is a Mg(2+) binding site. Lysine 461 contacts (6S)-5-formyl-5,6,7,8-tetrahydrofolate.

Belongs to the TRAFAC class TrmE-Era-EngA-EngB-Septin-like GTPase superfamily. TrmE GTPase family. In terms of assembly, homodimer. Heterotetramer of two MnmE and two MnmG subunits. Requires K(+) as cofactor.

It is found in the cytoplasm. Exhibits a very high intrinsic GTPase hydrolysis rate. Involved in the addition of a carboxymethylaminomethyl (cmnm) group at the wobble position (U34) of certain tRNAs, forming tRNA-cmnm(5)s(2)U34. In Leptospira biflexa serovar Patoc (strain Patoc 1 / Ames), this protein is tRNA modification GTPase MnmE.